A 542-amino-acid chain; its full sequence is CTP synthase (542 aa).

Residues methionine 1–isoleucine 265 are amidoligase domain. Serine 13 contacts CTP. Serine 13 is a binding site for UTP. Residue serine 14 to isoleucine 19 coordinates ATP. Position 54 (tyrosine 54) interacts with L-glutamine. Residue aspartate 71 participates in ATP binding. The Mg(2+) site is built by aspartate 71 and glutamate 139. CTP is bound by residues aspartate 146–glutamate 148, lysine 186–glutamine 191, and lysine 222. UTP contacts are provided by residues lysine 186–glutamine 191 and lysine 222. Residues threonine 291–leucine 541 form the Glutamine amidotransferase type-1 domain. Alanine 353 is a binding site for L-glutamine. Cysteine 380 functions as the Nucleophile; for glutamine hydrolysis in the catalytic mechanism. Residues phenylalanine 381 to glutamine 384, glutamate 404, and arginine 469 contribute to the L-glutamine site. Active-site residues include histidine 514 and glutamate 516.

This sequence belongs to the CTP synthase family. As to quaternary structure, homotetramer.

The catalysed reaction is UTP + L-glutamine + ATP + H2O = CTP + L-glutamate + ADP + phosphate + 2 H(+). The enzyme catalyses L-glutamine + H2O = L-glutamate + NH4(+). It carries out the reaction UTP + NH4(+) + ATP = CTP + ADP + phosphate + 2 H(+). The protein operates within pyrimidine metabolism; CTP biosynthesis via de novo pathway; CTP from UDP: step 2/2. With respect to regulation, allosterically activated by GTP, when glutamine is the substrate; GTP has no effect on the reaction when ammonia is the substrate. The allosteric effector GTP functions by stabilizing the protein conformation that binds the tetrahedral intermediate(s) formed during glutamine hydrolysis. Inhibited by the product CTP, via allosteric rather than competitive inhibition. Its function is as follows. Catalyzes the ATP-dependent amination of UTP to CTP with either L-glutamine or ammonia as the source of nitrogen. Regulates intracellular CTP levels through interactions with the four ribonucleotide triphosphates. This is CTP synthase from Bartonella quintana (strain Toulouse) (Rochalimaea quintana).